Reading from the N-terminus, the 453-residue chain is Vitamin D3 receptor A (453 aa).

The segment at residues 53-128 is a DNA-binding region (nuclear receptor); the sequence is PRICGVCGDK…IGMMKEFILT (76 aa). Residues Cys-56, Cys-59, Cys-73, Cys-76, Cys-92, Cys-98, Cys-108, and Cys-111 each coordinate Zn(2+). NR C4-type zinc fingers lie at residues 56-76 and 92-111; these read CGVC…CEGC and CPFN…CQAC. Residues 129-158 are hinge; sequence DEEVQRKKDLIMKRKEEEAAREARKPRLSD. Positions 159-449 constitute an NR LBD domain; it reads EQMQIINSLV…LTPLVLEVFG (291 aa). Residues Tyr-175 and Ser-265 each contribute to the calcitriol site. The tract at residues 274-292 is interaction with coactivator LXXLL motif; that stretch reads KMIPGFRDLTAEDQIALLK. 4 residues coordinate calcitriol: Arg-302, Ser-306, His-333, and His-423. The short motif at 442 to 450 is the 9aaTAD element; sequence PLVLEVFGS.

Belongs to the nuclear hormone receptor family. NR1 subfamily. Homodimer in the absence of bound vitamin D3. Heterodimer with RXRA after vitamin D3 binding. Interacts with ncoa1 and possibly other coactivators, leading to a strong increase of transcription of target genes. In terms of tissue distribution, detected in embryo 24 to 48 hours after fertilization and in gastrula.

It localises to the nucleus. It is found in the cytoplasm. In terms of biological role, nuclear receptor for calcitriol, the active form of vitamin D3 which mediates the action of this vitamin on cells. Enters the nucleus upon vitamin D3 binding where it forms heterodimers with the retinoid X receptor/RXR. The VDR-RXR heterodimers bind to specific response elements on DNA and activate the transcription of vitamin D3-responsive target genes. Recruited to promoters via its interaction with BAZ1B/WSTF which mediates the interaction with acetylated histones, an essential step for VDR-promoter association. Plays a central role in calcium homeostasis. This chain is Vitamin D3 receptor A (vdra), found in Danio rerio (Zebrafish).